Consider the following 546-residue polypeptide: MAAKDVVFGDSARSKMVEGVNILANAVKVTLGPKGRNVVLERSFGGPTVTKDGVSVAKEIELKDKLQNMGAQMVKEVASKTSDNAGDGTTTATVLAQSIVREGMKYVASGMNPMDLKRGIDKAVAAAVEELKKISKPCTTNKEIAQVGSISANSDTSIGDRIAEAMDKVGKEGVITVEDGKSLADELDVVEGMQFDRGYLSPYFINNPEKQVAVLDNPFVLLHDKKVSNIRDLLPVLEQVAKAGRPLLIIAEDIEGEALATLVVNNIRGILKTVAVKAPGFGDRRKAMLEDIAILTGGQVIAEETGLTLEKATLAELGQAKRIEVGKENTTIIDGAGEAASIEARVKQVRAQIEEATSDYDREKLQERVAKLAGGVAVIKVGAATEVEMKEKKARVEDALHATRAAVEEGIVAGGGVALIRARTAIASLTGANADQNAGIKIVLRAMEEPLRQIVTNGGEEASVVVAAVAAGQGNYGYNAATGEYVDMVEAGVVDPTKVTRTALQNAASVAGLLLTTDAAVAELPKEDAPMPGGMPGGMGGMGMDM.

Residues 30–33 (TLGP), Lys-51, 87–91 (DGTTT), Gly-415, 479–481 (NAA), and Asp-495 contribute to the ATP site. Residues 526 to 546 (KEDAPMPGGMPGGMGGMGMDM) form a disordered region. Positions 534 to 546 (GMPGGMGGMGMDM) are enriched in gly residues.

Belongs to the chaperonin (HSP60) family. As to quaternary structure, forms a cylinder of 14 subunits composed of two heptameric rings stacked back-to-back. Interacts with the co-chaperonin GroES.

The protein localises to the cytoplasm. The enzyme catalyses ATP + H2O + a folded polypeptide = ADP + phosphate + an unfolded polypeptide.. Functionally, together with its co-chaperonin GroES, plays an essential role in assisting protein folding. The GroEL-GroES system forms a nano-cage that allows encapsulation of the non-native substrate proteins and provides a physical environment optimized to promote and accelerate protein folding. The protein is Chaperonin GroEL 1 of Burkholderia ambifaria (strain ATCC BAA-244 / DSM 16087 / CCUG 44356 / LMG 19182 / AMMD) (Burkholderia cepacia (strain AMMD)).